The chain runs to 478 residues: Cysteine--tRNA ligase (478 aa).

Cys29 contributes to the Zn(2+) binding site. The 'HIGH' region motif lies at 31-41; sequence ATVQSIPHIGH. 3 residues coordinate Zn(2+): Cys207, His232, and Glu236. The short motif at 263 to 267 is the 'KMSKS' region element; the sequence is KMSKS. Lys266 contacts ATP.

It belongs to the class-I aminoacyl-tRNA synthetase family. As to quaternary structure, monomer. Zn(2+) is required as a cofactor.

The protein resides in the cytoplasm. The enzyme catalyses tRNA(Cys) + L-cysteine + ATP = L-cysteinyl-tRNA(Cys) + AMP + diphosphate. This Corynebacterium jeikeium (strain K411) protein is Cysteine--tRNA ligase.